The chain runs to 124 residues: Large ribosomal subunit protein bL12 (124 aa).

Positions 99-124 are disordered; sequence KEGMNKEDAEKAKADLEAAGAKVELK. Residues 101 to 114 are compositionally biased toward basic and acidic residues; the sequence is GMNKEDAEKAKADL. The segment covering 115 to 124 has biased composition (low complexity); the sequence is EAAGAKVELK.

It belongs to the bacterial ribosomal protein bL12 family. Homodimer. Part of the ribosomal stalk of the 50S ribosomal subunit. Forms a multimeric L10(L12)X complex, where L10 forms an elongated spine to which 2 to 4 L12 dimers bind in a sequential fashion. Binds GTP-bound translation factors.

In terms of biological role, forms part of the ribosomal stalk which helps the ribosome interact with GTP-bound translation factors. Is thus essential for accurate translation. This chain is Large ribosomal subunit protein bL12, found in Campylobacter hominis (strain ATCC BAA-381 / DSM 21671 / CCUG 45161 / LMG 19568 / NCTC 13146 / CH001A).